A 208-amino-acid polypeptide reads, in one-letter code: Proheparin-binding EGF-like growth factor (208 aa).

Residues 1–23 (MKLLPSVVLKLFLAAVLSALVTG) form the signal peptide. Residues 24–62 (ESLERLRRGLAAATSNPDPPTGTTNQLLPTGADRAQEVQ) constitute a propeptide that is removed on maturation. Residues 24–160 (ESLERLRRGL…ENPLYTYDHT (137 aa)) are Extracellular-facing. Residues 82–103 (ALATPGKEKNGKKKRKGKGLGK) form a disordered region. A glycan (O-linked (GalNAc...) threonine) is linked at T85. Residues 91-102 (NGKKKRKGKGLG) are compositionally biased toward basic residues. The EGF-like domain occupies 104–144 (KRDPCLKKYKDYCIHGECRYLKELRIPSCHCLPGYHGQRCH). Disulfide bonds link C108–C121, C116–C132, and C134–C143. The propeptide at 149-208 (PVENPLYTYDHTTVLAVVAVVLSSVCLLVIVGLLMFRYHRRGGYDLESEEKVKLGMASSH) is C-terminal. The chain crosses the membrane as a helical span at residues 161–184 (TVLAVVAVVLSSVCLLVIVGLLMF). Residues 185-208 (RYHRRGGYDLESEEKVKLGMASSH) lie on the Cytoplasmic side of the membrane.

As to quaternary structure, interacts with FBLN1. Interacts with EGFR and ERBB4. O-glycosylated. As to expression, most abundant in skeletal muscle, lung, spleen brain and heart.

Its subcellular location is the secreted. It is found in the extracellular space. The protein resides in the cell membrane. Functionally, growth factor that mediates its effects via EGFR, ERBB2 and ERBB4. Required for normal cardiac valve formation and normal heart function. Promotes smooth muscle cell proliferation. May be involved in macrophage-mediated cellular proliferation. It is mitogenic for fibroblasts, but not endothelial cells. It is able to bind EGF receptor/EGFR with higher affinity than EGF itself and is a far more potent mitogen for smooth muscle cells than EGF. Also acts as a diphtheria toxin receptor. The sequence is that of Proheparin-binding EGF-like growth factor (Hbegf) from Rattus norvegicus (Rat).